We begin with the raw amino-acid sequence, 943 residues long: UvrABC system protein A (943 aa).

Position 32 to 39 (32 to 39 (GLSGSGKS)) interacts with ATP. The segment at 251–278 (CPVCGFTVPELEPRLFSFNAPFGSCSEC) adopts a C4-type zinc-finger fold. 2 ABC transporter domains span residues 308-589 (WNPI…SKSI) and 609-937 (GNGR…HYLK). 641–648 (GVSGSGKS) contacts ATP. A C4-type zinc finger spans residues 740-766 (CEACSGDGIIKIEMHFLPDVYVACEVC).

The protein belongs to the ABC transporter superfamily. UvrA family. Forms a heterotetramer with UvrB during the search for lesions.

The protein localises to the cytoplasm. The UvrABC repair system catalyzes the recognition and processing of DNA lesions. UvrA is an ATPase and a DNA-binding protein. A damage recognition complex composed of 2 UvrA and 2 UvrB subunits scans DNA for abnormalities. When the presence of a lesion has been verified by UvrB, the UvrA molecules dissociate. This is UvrABC system protein A from Streptococcus pneumoniae serotype 4 (strain ATCC BAA-334 / TIGR4).